The chain runs to 2646 residues: Probable helicase senataxin (2646 aa).

Serine 102 is modified (phosphoserine). Residue lysine 339 forms a Glycyl lysine isopeptide (Lys-Gly) (interchain with G-Cter in SUMO1) linkage. A Phosphoserine modification is found at serine 640. Disordered regions lie at residues 705–734 (KISA…WGCD) and 825–876 (GGAL…DDED). A compositionally biased stretch (polar residues) spans 714-727 (ESSSYAPSNSTSRN). Positions 867 to 876 (LDNSSSDDED) are enriched in acidic residues. A phosphoserine mark is found at serine 870, serine 871, serine 872, serine 938, serine 1002, and serine 1004. The interval 1001 to 1023 (ISDSDEEEDEDEDERSSSEENIK) is disordered. The segment covering 1003–1014 (DSDEEEDEDEDE) has biased composition (acidic residues). A Glycyl lysine isopeptide (Lys-Gly) (interchain with G-Cter in SUMO2) cross-link involves residue lysine 1051. The span at 1122–1133 (RNKAEGVKEHAG) shows a compositional bias: basic and acidic residues. The interval 1122-1245 (RNKAEGVKEH…DTRRGQSKSS (124 aa)) is disordered. A compositionally biased stretch (basic residues) spans 1147-1156 (GVKKPKRKRY). The span at 1176 to 1189 (LPDRRDLTESDLKS) shows a compositional bias: basic and acidic residues. Positions 1196 to 1211 (TPSSSVERDSTILQKS) are enriched in polar residues. Positions 1212-1222 (TKSRTHSKPVR) are enriched in basic residues. A Phosphoserine modification is found at serine 1318. Glycyl lysine isopeptide (Lys-Gly) (interchain with G-Cter in SUMO2) cross-links involve residues lysine 1328, lysine 1329, and lysine 1398. At serine 1472 the chain carries Phosphoserine. At threonine 1474 the chain carries Phosphothreonine. The interval 1591–1627 (LSKSLESTTLQQSALKNKSSGAQPNLKVTPPSSMGSQ) is disordered. The span at 1595-1613 (LESTTLQQSALKNKSSGAQ) shows a compositional bias: polar residues. 1939-1946 (GPPGTGKS) contacts ATP. The Bipartite nuclear localization signal signature appears at 2046–2063 (KKDLPSHIQEMLRRKEIL). Threonine 2450 is subject to Phosphothreonine. 3 disordered regions span residues 2450–2472 (THPP…NRLD), 2486–2506 (HTPS…QDRL), and 2569–2624 (SHRS…THHV). Composition is skewed to basic and acidic residues over residues 2496–2506 (GPERPLLQDRL) and 2593–2608 (KYSD…REPR). The interval 2632 to 2646 (RRRLDDSSAKRRQFL) is necessary for nuclear localization.

The protein belongs to the DNA2/NAM7 helicase family. As to quaternary structure, homodimer. Interacts with PER2; the interaction inhibits termination of circadian target genes. Interacts with CHD4, POLR2A, PRKDC and TRIM28. Interacts with UBE2I. Interacts (via N-terminus domain) with EXOSC9 (via C-terminus region); the interaction enhances SETX sumoylation. Interacts with NCL (via N-terminus domain). Interacts with PABPN1, PABPC1 and SF3B1. Interacts with SMN1/SMN2 and POLR2A; SMN1/SMN2 recruits SETX to POLR2A. Ubiquitinated. In terms of processing, sumoylated preferentially with SUMO2 or SUMO3. In terms of tissue distribution, expressed in cerebellum, hippocampus, olfactory bulb, Bergmann glial fibers, stellate cells and Purkinje cells. Expressed in the epithelial cells of the lens but not in mature lens fiber cells. Expressed in the retina (highly expressed in inner and outer segments of photoreceptors and outer plexiform layer cells but weakly expressed in the inner plexiform and ganglion cell layers). Expressed in the kidney.

The protein localises to the nucleus. The protein resides in the nucleoplasm. Its subcellular location is the nucleolus. It localises to the cytoplasm. It is found in the chromosome. The protein localises to the telomere. The protein resides in the cell projection. Its subcellular location is the axon. It localises to the growth cone. Functionally, probable RNA/DNA helicase involved in diverse aspects of RNA metabolism and genomic integrity. Plays a role in transcription regulation by its ability to modulate RNA Polymerase II (Pol II) binding to chromatin and through its interaction with proteins involved in transcription. Contributes to the mRNA splicing efficiency and splice site selection. Required for the resolution of R-loop RNA-DNA hybrid formation at G-rich pause sites located downstream of the poly(A) site, allowing XRN2 recruitment and XRN2-mediated degradation of the downstream cleaved RNA and hence efficient RNA polymerase II (RNAp II) transcription termination. Required for the 3' transcriptional termination of PER1 and CRY2, thus playing an important role in the circadian rhythm regulation. Involved in DNA double-strand breaks damage response generated by oxidative stress. In association with RRP45, targets the RNA exosome complex to sites of transcription-induced DNA damage. Plays a role in the development and maturation of germ cells: essential for male meiosis, acting at the interface of transcription and meiotic recombination, and in the process of gene silencing during meiotic sex chromosome inactivation (MSCI). Plays a role in neurite outgrowth in hippocampal cells through FGF8-activated signaling pathways. Inhibits retinoic acid-induced apoptosis. May be involved in telomeric stability through the regulation of telomere repeat-containing RNA (TERRA) transcription. This chain is Probable helicase senataxin, found in Mus musculus (Mouse).